We begin with the raw amino-acid sequence, 359 residues long: NAC domain-containing protein 45 (359 aa).

The NAC domain maps to 19–185; sequence LPPGFRFHPT…EWVVCKVFHK (167 aa). Residues 130 to 191 mediate DNA binding; sequence VGMKKTLVFY…VFHKKGDDRE (62 aa).

In terms of tissue distribution, expressed in roots. Expressed at low levels in leaves, stems and panicles.

Its subcellular location is the nucleus. Transcription activator involved in responses to drought stress and salt stress. Transactivates the stress response genes LEA19 and PM19L. This chain is NAC domain-containing protein 45, found in Oryza sativa subsp. japonica (Rice).